A 53-amino-acid polypeptide reads, in one-letter code: Large ribosomal subunit protein eL24 (53 aa).

Residues Cys4, Cys7, Cys30, and Cys34 each contribute to the Zn(2+) site. The C4-type zinc-finger motif lies at Cys4–Cys34.

It belongs to the eukaryotic ribosomal protein eL24 family. In terms of assembly, part of the 50S ribosomal subunit. Forms a cluster with proteins L3 and L14. It depends on Zn(2+) as a cofactor.

In terms of biological role, binds to the 23S rRNA. In Methanothermobacter thermautotrophicus (strain ATCC 29096 / DSM 1053 / JCM 10044 / NBRC 100330 / Delta H) (Methanobacterium thermoautotrophicum), this protein is Large ribosomal subunit protein eL24.